A 303-amino-acid chain; its full sequence is Mitochondrial carrier homolog 2 (303 aa).

A2 bears the N-acetylalanine mark. Over 2–15 (ADAASQVLLGSGLT) the chain is Mitochondrial intermembrane. Solcar repeat units follow at residues 2 to 98 (ADAA…YQEC) and 118 to 206 (DRVI…VNTY). The helical transmembrane segment at 16-36 (ILSQPLMYVKVLIQVGYEPLA) threads the bilayer. Residues 37–77 (PTVGRNIFGRQVCQLPGLFCYAQHIASIDGKRGLFTGLTPR) lie on the Cytoplasmic side of the membrane. A helical membrane pass occupies residues 78-92 (LCSGVLGTVVHGKVL). The Mitochondrial intermembrane segment spans residues 93 to 135 (QHYQECDKAEESGSGNVQKEVSSSFDRVIKETTREMMARSAAT). The chain crosses the membrane as a helical span at residues 136 to 156 (LITHPFHVITLRSMVQFIGRE). Residues 157-180 (SKYCGLCDSIATIYREEGILGFFA) are Cytoplasmic-facing. The helical transmembrane segment at 181–199 (GLIPRLLGDIISLWLCNSL) threads the bilayer. Over 200–231 (AYLVNTYALDSGVSTMNEMKSYSQAVTGFFAS) the chain is Mitochondrial intermembrane. Residues 232–252 (MLTYPFVLVSNLMAVNNCGLA) form a helical membrane-spanning segment. The Cytoplasmic segment spans residues 253–280 (GGCPPYAPIYSSWIDCWCMLQKEGNMSR). The helical transmembrane segment at 281–303 (GNSLFFRKVPFGKTYCCDLRMLI) threads the bilayer.

It belongs to the mitochondrial carrier (TC 2.A.29) family. As to quaternary structure, interacts with p15BID.

It is found in the mitochondrion outer membrane. Protein insertase that mediates insertion of transmembrane proteins into the mitochondrial outer membrane. Catalyzes insertion of proteins with alpha-helical transmembrane regions, such as signal-anchored, tail-anchored and multi-pass membrane proteins. Does not mediate insertion of beta-barrel transmembrane proteins. Also acts as a receptor for the truncated form of pro-apoptotic BH3-interacting domain death agonist (p15 BID) and has therefore a critical function in apoptosis. Regulates the quiescence/cycling of hematopoietic stem cells (HSCs). Acts as a regulator of mitochondrial fusion, essential for the naive-to-primed interconversion of embryonic stem cells (ESCs). Acts as a regulator of lipid homeostasis and has a regulatory role in adipocyte differentiation and biology. The protein is Mitochondrial carrier homolog 2 (MTCH2) of Bos taurus (Bovine).